Reading from the N-terminus, the 208-residue chain is Ribosomal RNA large subunit methyltransferase E (208 aa).

S-adenosyl-L-methionine is bound by residues Gly-63, Trp-65, Asp-83, Asp-99, and Asp-124. Lys-164 functions as the Proton acceptor in the catalytic mechanism.

The protein belongs to the class I-like SAM-binding methyltransferase superfamily. RNA methyltransferase RlmE family.

It localises to the cytoplasm. The catalysed reaction is uridine(2552) in 23S rRNA + S-adenosyl-L-methionine = 2'-O-methyluridine(2552) in 23S rRNA + S-adenosyl-L-homocysteine + H(+). Specifically methylates the uridine in position 2552 of 23S rRNA at the 2'-O position of the ribose in the fully assembled 50S ribosomal subunit. This is Ribosomal RNA large subunit methyltransferase E from Blochmanniella pennsylvanica (strain BPEN).